Consider the following 1371-residue polypeptide: DNA-directed RNA polymerase subunit beta (1371 aa).

Belongs to the RNA polymerase beta chain family. The RNAP catalytic core consists of 2 alpha, 1 beta, 1 beta' and 1 omega subunit. When a sigma factor is associated with the core the holoenzyme is formed, which can initiate transcription.

It carries out the reaction RNA(n) + a ribonucleoside 5'-triphosphate = RNA(n+1) + diphosphate. Its function is as follows. DNA-dependent RNA polymerase catalyzes the transcription of DNA into RNA using the four ribonucleoside triphosphates as substrates. This chain is DNA-directed RNA polymerase subunit beta, found in Geobacter sp. (strain M21).